Here is a 193-residue protein sequence, read N- to C-terminus: Phosphoheptose isomerase (193 aa).

Positions 37-193 constitute an SIS domain; the sequence is IAQSFKNEKK…LIIEKEMQKN (157 aa). 52 to 54 lines the substrate pocket; it reads NGG. Residues His61 and Glu65 each contribute to the Zn(2+) site. Substrate-binding positions include Glu65, 93-94, 119-121, Ser124, and Gln172; these read ND and STS. Positions 172 and 180 each coordinate Zn(2+).

The protein belongs to the SIS family. GmhA subfamily. As to quaternary structure, homotetramer. It depends on Zn(2+) as a cofactor.

It localises to the cytoplasm. The enzyme catalyses 2 D-sedoheptulose 7-phosphate = D-glycero-alpha-D-manno-heptose 7-phosphate + D-glycero-beta-D-manno-heptose 7-phosphate. Its pathway is carbohydrate biosynthesis; D-glycero-D-manno-heptose 7-phosphate biosynthesis; D-glycero-alpha-D-manno-heptose 7-phosphate and D-glycero-beta-D-manno-heptose 7-phosphate from sedoheptulose 7-phosphate: step 1/1. Functionally, catalyzes the isomerization of sedoheptulose 7-phosphate in D-glycero-D-manno-heptose 7-phosphate. This is Phosphoheptose isomerase from Buchnera aphidicola subsp. Acyrthosiphon pisum (strain 5A).